A 639-amino-acid polypeptide reads, in one-letter code: MGKIIGIDLGTTNSCVAVLDGGKARVLENAEGDRTTPSIIAYTDDETIVGSPAKRQAVTNPTNTFFAIKRLIGRRFKDDEVQRDVNIMPFKIIQADNGDAWVESRGNKMAPPQVSAEILKKMKKTAEDFLGEEVTEAVITVPAYFNDSQRQATKDAGRIAGLDVKRIINEPTAAALAYGIDKKQGDNIVAVYDLGGGTFDISIIEIDSNDGDQTFEVLATNGDTHLGGEDFDNRLINYLADEFKKEQGLDLRKDPLAMQRLKEAAEKAKIELSSTNHTEVNLPYITADATGPKHLVIKITRAKLESLVEDLILRTLEPLKVALADADLSVSDVNEVILVGGQTRMPKVQEAVTNFFGKEPRKDVNPDEAVAVGAAIQAGVLSGDVKDVLLLDVTPLSLGIETMGSVMTKLIEKNTTIPTKAQQVFSTADDNQSAVTIHVLQGERKQASANKSLGQFNLDGIEPAPRGQPQIEVMFDIDADGILHVSATDKKTGKKQNITIKASSGLSEEEVAQMVRDAEAHADEDKKFEELVQARNQADGLVHATKKQVEEAGDALPSEDKEKIQAAMAAVDTATKGNDKEAIEKASQELIEASAKLMEIAQAKSQAQGGAETNAGKQANAAADDVVDAEFEEVKDDKK.

T198 carries the post-translational modification Phosphothreonine; by autocatalysis. Positions 605 to 624 are disordered; it reads SQAQGGAETNAGKQANAAAD.

Belongs to the heat shock protein 70 family.

Acts as a chaperone. The polypeptide is Chaperone protein DnaK (Shewanella putrefaciens (strain CN-32 / ATCC BAA-453)).